The primary structure comprises 549 residues: Guanine nucleotide-binding protein-like 3 (549 aa).

Residues 1–45 (MKRPKLKKASKRMTCHKRYKIQKKVREHHRKLRKEAKKRGHKKPR) show a composition bias toward basic residues. 2 disordered regions span residues 1 to 56 (MKRP…SAPF) and 73 to 104 (ELKQQQKLDRQKELEKKRKLETNPDIKPSNVE). Residues 2–46 (KRPKLKKASKRMTCHKRYKIQKKVREHHRKLRKEAKKRGHKKPRK) are basic. Residues 56–95 (FKEALLREAELRKQRLEELKQQQKLDRQKELEKKRKLETN) adopt a coiled-coil conformation. Residues 73 to 96 (ELKQQQKLDRQKELEKKRKLETNP) are compositionally biased toward basic and acidic residues. The residue at position 79 (K79) is an N6-acetyllysine. Residues K91 and K99 each participate in a glycyl lysine isopeptide (Lys-Gly) (interchain with G-Cter in SUMO2) cross-link. S101 carries the post-translational modification Phosphoserine. Residues K114, K179, K196, K253, K267, and K275 each participate in a glycyl lysine isopeptide (Lys-Gly) (interchain with G-Cter in SUMO2) cross-link. The CP-type G domain maps to 131–312 (CQELKKVIEA…IIDSPSFIVS (182 aa)). Residue 178 to 181 (NKSD) coordinates GTP. A GTP-binding site is contributed by 261-268 (GFPNVGKS). Residues 282–456 (VGVSMGLTRS…HLANSILFQS (175 aa)) are intermediate. A GTP-binding site is contributed by 305–308 (DSPS). An acidic region spans residues 465–543 (EEKDIHEELP…KIIEEDDAYD (79 aa)). Over residues 474–483 (PKRKERKQEE) the composition is skewed to basic and acidic residues. The segment at 474 to 532 (PKRKERKQEEREDDKDSDQETVDEEVDENSSGMFAAEETGEALSEETTAGEQSTRSFIL) is disordered. A compositionally biased stretch (acidic residues) spans 484 to 501 (REDDKDSDQETVDEEVDE). Phosphoserine occurs at positions 490, 504, 517, and 529. The span at 518 to 529 (EETTAGEQSTRS) shows a compositional bias: polar residues.

Belongs to the TRAFAC class YlqF/YawG GTPase family. As to quaternary structure, interacts with MDM2; this interaction stabilizes MDM2. Interaction with MDM2 occurs in the nucleoplasm and is triggered by a nucleolar release mechanism, such as mitosis-induced nucleolar disassembly. Indirectly interacts with TP53, via MDM2-binding. Interacts with TSC22D1 isoform 2. In terms of tissue distribution, increased levels in lung tissue in cancer patients.

It localises to the nucleus. The protein resides in the nucleolus. In terms of biological role, may be required to maintain the proliferative capacity of stem cells. Stabilizes MDM2 by preventing its ubiquitination, and hence proteasomal degradation. This is Guanine nucleotide-binding protein-like 3 (GNL3) from Homo sapiens (Human).